A 186-amino-acid chain; its full sequence is Putative 5'(3')-deoxyribonucleotidase (186 aa).

Aspartate 6 serves as the catalytic Nucleophile. Mg(2+)-binding residues include aspartate 6, aspartate 8, and aspartate 137. The active-site Proton donor is aspartate 8.

The protein belongs to the 5'(3')-deoxyribonucleotidase family. The cofactor is Mg(2+).

Dephosphorylates the 5' and 2'(3')-phosphates of deoxyribonucleotides. This Bordetella bronchiseptica (strain ATCC BAA-588 / NCTC 13252 / RB50) (Alcaligenes bronchisepticus) protein is Putative 5'(3')-deoxyribonucleotidase.